The chain runs to 107 residues: Nucleoid-associated protein BT_0257 (107 aa).

The protein belongs to the YbaB/EbfC family. Homodimer.

It localises to the cytoplasm. Its subcellular location is the nucleoid. Its function is as follows. Binds to DNA and alters its conformation. May be involved in regulation of gene expression, nucleoid organization and DNA protection. The protein is Nucleoid-associated protein BT_0257 of Bartonella tribocorum (strain CIP 105476 / IBS 506).